A 186-amino-acid chain; its full sequence is Elongation factor P (186 aa).

It belongs to the elongation factor P family.

The protein localises to the cytoplasm. The protein operates within protein biosynthesis; polypeptide chain elongation. In terms of biological role, involved in peptide bond synthesis. Stimulates efficient translation and peptide-bond synthesis on native or reconstituted 70S ribosomes in vitro. Probably functions indirectly by altering the affinity of the ribosome for aminoacyl-tRNA, thus increasing their reactivity as acceptors for peptidyl transferase. This chain is Elongation factor P, found in Brucella abortus (strain S19).